The primary structure comprises 255 residues: Small ribosomal subunit protein uS2 (255 aa).

Belongs to the universal ribosomal protein uS2 family.

This is Small ribosomal subunit protein uS2 from Streptococcus uberis (strain ATCC BAA-854 / 0140J).